Consider the following 336-residue polypeptide: MAFNLRNRNFLKLLDFTPREIQHMLELAAELKKAKYNGYEQPRLKGKNIALIFEKASTRTRCAFEVAAYDQGANVTYLGPSGSQIGYKESMKDTARVLGRMYDGIEYRGFGQEIVETLGAHAGVPVWNGLTDEFHPTQILADFLTMQEHARGKQLSEVTFAYLGDARNNMGNSLMVGAAKMGMDIRLVAPKAFWPEEELVAQCREIAEETGAKITVTEDVQEGVEGCDFLYTDVWVSMGEAKEAWAERISLMMPYQVNMAMLKATGNPHVKFMHCLPAFHGEDTVVGKELAQEYPELKDGVEVTDEVVESKHSIVFDEAENRLHTIKAIMVATLGQ.

Carbamoyl phosphate contacts are provided by residues 57–60, Gln-84, Arg-108, and 135–138; these read STRT and HPTQ. L-ornithine is bound by residues Asn-169, Asp-233, and 237-238; that span reads SM. Carbamoyl phosphate-binding positions include 275 to 276 and Arg-322; that span reads CL.

The protein belongs to the aspartate/ornithine carbamoyltransferase superfamily. OTCase family.

The protein resides in the cytoplasm. The enzyme catalyses carbamoyl phosphate + L-ornithine = L-citrulline + phosphate + H(+). It participates in amino-acid degradation; L-arginine degradation via ADI pathway; carbamoyl phosphate from L-arginine: step 2/2. Reversibly catalyzes the transfer of the carbamoyl group from carbamoyl phosphate (CP) to the N(epsilon) atom of ornithine (ORN) to produce L-citrulline. In Photobacterium profundum (strain SS9), this protein is Ornithine carbamoyltransferase, catabolic.